The chain runs to 229 residues: Cytidylate kinase (229 aa).

G10 to T18 is a binding site for ATP.

This sequence belongs to the cytidylate kinase family. Type 1 subfamily.

Its subcellular location is the cytoplasm. The enzyme catalyses CMP + ATP = CDP + ADP. The catalysed reaction is dCMP + ATP = dCDP + ADP. This Bacteroides fragilis (strain ATCC 25285 / DSM 2151 / CCUG 4856 / JCM 11019 / LMG 10263 / NCTC 9343 / Onslow / VPI 2553 / EN-2) protein is Cytidylate kinase.